The following is a 508-amino-acid chain: Bifunctional purine biosynthesis protein PurH (508 aa).

The MGS-like domain maps to 1–144; the sequence is MTRALLSVSD…KNFAGVLPIV (144 aa).

This sequence belongs to the PurH family.

The catalysed reaction is (6R)-10-formyltetrahydrofolate + 5-amino-1-(5-phospho-beta-D-ribosyl)imidazole-4-carboxamide = 5-formamido-1-(5-phospho-D-ribosyl)imidazole-4-carboxamide + (6S)-5,6,7,8-tetrahydrofolate. It carries out the reaction IMP + H2O = 5-formamido-1-(5-phospho-D-ribosyl)imidazole-4-carboxamide. It participates in purine metabolism; IMP biosynthesis via de novo pathway; 5-formamido-1-(5-phospho-D-ribosyl)imidazole-4-carboxamide from 5-amino-1-(5-phospho-D-ribosyl)imidazole-4-carboxamide (10-formyl THF route): step 1/1. Its pathway is purine metabolism; IMP biosynthesis via de novo pathway; IMP from 5-formamido-1-(5-phospho-D-ribosyl)imidazole-4-carboxamide: step 1/1. In Leuconostoc citreum (strain KM20), this protein is Bifunctional purine biosynthesis protein PurH.